The chain runs to 124 residues: MAKYLTQIIVMGVQVVGRDFAKALRQEFAASQAAADARGHAGHQSAAASNLSGLSLQEAQQILNISKLSPEEVQNYEHLFKVNDKSVGDSFYLQSKVVRAKERLDEELQIQAQEDREKGQMPKT.

Residues 58-109 form a J-like region; it reads EAQQILNISKLSPEEVQNYEHLFKVNDKSVGDSFYLQSKVVRAKERLDEELQ. Ser69 bears the Phosphoserine mark.

It belongs to the TIM16/PAM16 family. As to quaternary structure, probable component of the PAM complex at least composed of a mitochondrial HSP70 protein, GRPEL1 or GRPEL2, TIMM44, TIMM16/PAM16 and TIMM14/DNAJC19. Interacts with DNAJC19. Directly interacts with DNAJC15; this interaction counteracts DNAJC15-dependent stimulation of HSPA9 ATPase activity. Associates with the TIM23 complex.

The protein localises to the mitochondrion inner membrane. Functionally, regulates ATP-dependent protein translocation into the mitochondrial matrix. Inhibits DNAJC19 stimulation of HSPA9/Mortalin ATPase activity. This Rattus norvegicus (Rat) protein is Mitochondrial import inner membrane translocase subunit TIM16 (Magmas-ps1).